Consider the following 144-residue polypeptide: Large ribosomal subunit protein uL15 (144 aa).

The tract at residues 1-53 is disordered; that stretch reads MFLNTIKPGEGAKHAKRRVGRGIGSGLGKTAGRGHKGQKSRSGGFHKVGFEGG. The segment covering 21–31 has biased composition (gly residues); the sequence is RGIGSGLGKTA.

The protein belongs to the universal ribosomal protein uL15 family. As to quaternary structure, part of the 50S ribosomal subunit.

Binds to the 23S rRNA. This chain is Large ribosomal subunit protein uL15, found in Laribacter hongkongensis (strain HLHK9).